The sequence spans 92 residues: Phenol 2-monooxygenase, auxiliary component DmpK (92 aa).

As to quaternary structure, homotrimer or homotetramer. Interacts with the phenol hydroxylase components DmpL (P1 component) and DmpN (P3 component).

Its pathway is aromatic compound metabolism; phenol degradation. Functionally, dmpK is an auxiliary protein associated with the multicomponent phenol hydroxylase DmpLMNOP and it may be involved in the post-translational incorporation of iron into the oxygenase component of the phenol hydroxylase. Required for growth on phenol but not for in vitro phenol hydroxylase activity. The sequence is that of Phenol 2-monooxygenase, auxiliary component DmpK from Pseudomonas sp. (strain CF600).